The sequence spans 101 residues: Urease subunit beta (101 aa).

It belongs to the urease beta subunit family. Heterotrimer of UreA (gamma), UreB (beta) and UreC (alpha) subunits. Three heterotrimers associate to form the active enzyme.

Its subcellular location is the cytoplasm. It catalyses the reaction urea + 2 H2O + H(+) = hydrogencarbonate + 2 NH4(+). The protein operates within nitrogen metabolism; urea degradation; CO(2) and NH(3) from urea (urease route): step 1/1. The polypeptide is Urease subunit beta (Dechloromonas aromatica (strain RCB)).